Reading from the N-terminus, the 442-residue chain is Signal recognition particle 54 kDa protein (442 aa).

Residues 106–113, 186–190, and 244–247 contribute to the GTP site; these read GLQGSGKT, DTAGR, and TKLD.

This sequence belongs to the GTP-binding SRP family. SRP54 subfamily. As to quaternary structure, part of the signal recognition particle protein translocation system, which is composed of SRP and FtsY. Archaeal SRP consists of a 7S RNA molecule of 300 nucleotides and two protein subunits: SRP54 and SRP19.

It is found in the cytoplasm. The enzyme catalyses GTP + H2O = GDP + phosphate + H(+). Functionally, involved in targeting and insertion of nascent membrane proteins into the cytoplasmic membrane. Binds to the hydrophobic signal sequence of the ribosome-nascent chain (RNC) as it emerges from the ribosomes. The SRP-RNC complex is then targeted to the cytoplasmic membrane where it interacts with the SRP receptor FtsY. The protein is Signal recognition particle 54 kDa protein of Methanothermobacter thermautotrophicus (strain ATCC 29096 / DSM 1053 / JCM 10044 / NBRC 100330 / Delta H) (Methanobacterium thermoautotrophicum).